Here is a 270-residue protein sequence, read N- to C-terminus: Non-structural maintenance of chromosomes element 1 homolog (270 aa).

An RING-type; atypical zinc finger spans residues 185–226 (CNVCHKIAIQCQLCENCGIPLHLQCAGIYFRGIANPLCPNCK). A disordered region spans residues 236–270 (LSQVSSQGPSHSQAAPVRGRNQRSRNISTVARTSR). 2 stretches are compositionally biased toward polar residues: residues 237 to 248 (SQVSSQGPSHSQ) and 259 to 270 (SRNISTVARTSR).

This sequence belongs to the NSE1 family. Component of the SMC5-SMC6 complex.

The protein resides in the nucleus. Its subcellular location is the chromosome. It is found in the telomere. It carries out the reaction S-ubiquitinyl-[E2 ubiquitin-conjugating enzyme]-L-cysteine + [acceptor protein]-L-lysine = [E2 ubiquitin-conjugating enzyme]-L-cysteine + N(6)-ubiquitinyl-[acceptor protein]-L-lysine.. Functionally, RING-type zinc finger-containing E3 ubiquitin ligase that assembles with melanoma antigen protein (MAGE) to catalyze the direct transfer of ubiquitin from E2 ubiquitin-conjugating enzyme to a specific substrate. Within MAGE-RING ubiquitin ligase complex, MAGE stimulates and specifies ubiquitin ligase activity likely through recruitment and/or stabilization of the E2 ubiquitin-conjugating enzyme at the E3:substrate complex. Involved in maintenance of genome integrity, DNA damage response and DNA repair. The protein is Non-structural maintenance of chromosomes element 1 homolog (nsmce1) of Xenopus tropicalis (Western clawed frog).